A 240-amino-acid chain; its full sequence is U1 small nuclear ribonucleoprotein C (240 aa).

Residues 4–36 form a Matrin-type zinc finger; sequence YYCEYCDIYLTHSSPVGRRQHIQGRKHISAKIE. 2 disordered regions span residues 86 to 122 and 175 to 240; these read GMKH…SKYH and IDSD…SVDA. 2 stretches are compositionally biased toward basic and acidic residues: residues 178-194 and 203-219; these read DPVK…DNAI and DQGD…HADH. Residues 226–240 are compositionally biased toward polar residues; it reads TDGTANGNDQVSVDA.

It belongs to the U1 small nuclear ribonucleoprotein C family. In terms of assembly, U1 snRNP is composed of the 7 core Sm proteins B/B', D1, D2, D3, E, F and G that assemble in a heptameric protein ring on the Sm site of the small nuclear RNA to form the core snRNP, and at least 3 U1 snRNP-specific proteins U1-70K, U1-A and U1-C. U1-C interacts with U1 snRNA and the 5' splice-site region of the pre-mRNA.

The protein resides in the nucleus. In terms of biological role, component of the spliceosomal U1 snRNP, which is essential for recognition of the pre-mRNA 5' splice-site and the subsequent assembly of the spliceosome. U1-C is directly involved in initial 5' splice-site recognition for both constitutive and regulated alternative splicing. The interaction with the 5' splice-site seems to precede base-pairing between the pre-mRNA and the U1 snRNA. Stimulates commitment or early (E) complex formation by stabilizing the base pairing of the 5' end of the U1 snRNA and the 5' splice-site region. This chain is U1 small nuclear ribonucleoprotein C, found in Plasmodium vivax (strain Salvador I).